The following is a 227-amino-acid chain: MEQPVGQPAYVLHSRAYKETSALVDFFTPQGRMRAVLRRARSKGGSLVRPFVSLEVELRGRGELKNVSRMDSTGIAAWLHGDALFSGLYLNELLMRLLPAEAPFPTIFEHYTLTLQALAEGRPLEPLLRSFEWRLLDELGYAFSLNQDVNDQPIAADGLYRLRVDAGLERVELLQPGLFRGIELLALAEADWDAPGALLAAKRLMRQALAVHLGAKPLVSRELFRKR.

Belongs to the RecO family.

In terms of biological role, involved in DNA repair and RecF pathway recombination. This Pseudomonas putida (strain ATCC 47054 / DSM 6125 / CFBP 8728 / NCIMB 11950 / KT2440) protein is DNA repair protein RecO.